Consider the following 110-residue polypeptide: Integration host factor subunit beta (110 aa).

This sequence belongs to the bacterial histone-like protein family. Heterodimer of an alpha and a beta chain.

This protein is one of the two subunits of integration host factor, a specific DNA-binding protein that functions in genetic recombination as well as in transcriptional and translational control. This chain is Integration host factor subunit beta, found in Parvibaculum lavamentivorans (strain DS-1 / DSM 13023 / NCIMB 13966).